Here is a 305-residue protein sequence, read N- to C-terminus: Tyrosine recombinase XerC (305 aa).

The Core-binding (CB) domain maps to 1–93 (MVLDGFAAHF…SWRQYCVWLV (93 aa)). A Tyr recombinase domain is found at 114 to 294 (RVPKALPQEW…DFDHIARLYD (181 aa)). Residues Arg-155, Lys-179, His-246, Arg-249, and His-272 contribute to the active site. The active-site O-(3'-phospho-DNA)-tyrosine intermediate is Tyr-281.

The protein belongs to the 'phage' integrase family. XerC subfamily. Forms a cyclic heterotetrameric complex composed of two molecules of XerC and two molecules of XerD.

The protein localises to the cytoplasm. Site-specific tyrosine recombinase, which acts by catalyzing the cutting and rejoining of the recombining DNA molecules. The XerC-XerD complex is essential to convert dimers of the bacterial chromosome into monomers to permit their segregation at cell division. It also contributes to the segregational stability of plasmids. The chain is Tyrosine recombinase XerC from Neisseria meningitidis serogroup C / serotype 2a (strain ATCC 700532 / DSM 15464 / FAM18).